Consider the following 429-residue polypeptide: Enolase (429 aa).

A (2R)-2-phosphoglycerate-binding site is contributed by Gln163. Residue Glu205 is the Proton donor of the active site. The Mg(2+) site is built by Asp242, Glu285, and Asp312. (2R)-2-phosphoglycerate contacts are provided by Lys337, Arg366, Ser367, and Lys388. The Proton acceptor role is filled by Lys337.

This sequence belongs to the enolase family. As to quaternary structure, component of the RNA degradosome, a multiprotein complex involved in RNA processing and mRNA degradation. It depends on Mg(2+) as a cofactor.

It is found in the cytoplasm. Its subcellular location is the secreted. The protein localises to the cell surface. The catalysed reaction is (2R)-2-phosphoglycerate = phosphoenolpyruvate + H2O. It functions in the pathway carbohydrate degradation; glycolysis; pyruvate from D-glyceraldehyde 3-phosphate: step 4/5. Catalyzes the reversible conversion of 2-phosphoglycerate (2-PG) into phosphoenolpyruvate (PEP). It is essential for the degradation of carbohydrates via glycolysis. This Alkalilimnicola ehrlichii (strain ATCC BAA-1101 / DSM 17681 / MLHE-1) protein is Enolase.